Reading from the N-terminus, the 274-residue chain is 2,3,4,5-tetrahydropyridine-2,6-dicarboxylate N-succinyltransferase (274 aa).

It belongs to the transferase hexapeptide repeat family.

The protein resides in the cytoplasm. It carries out the reaction (S)-2,3,4,5-tetrahydrodipicolinate + succinyl-CoA + H2O = (S)-2-succinylamino-6-oxoheptanedioate + CoA. The protein operates within amino-acid biosynthesis; L-lysine biosynthesis via DAP pathway; LL-2,6-diaminopimelate from (S)-tetrahydrodipicolinate (succinylase route): step 1/3. This chain is 2,3,4,5-tetrahydropyridine-2,6-dicarboxylate N-succinyltransferase, found in Klebsiella pneumoniae (strain 342).